Here is a 43-residue protein sequence, read N- to C-terminus: EDLQGTAVQERSAKASDEEEAIRTLLLTNVEFNRPFVLSIYDR.

Belongs to the serpin family. Post-translationally, N-glycosylated with carbohydrates having biantennary side chains. In terms of tissue distribution, plasma.

The protein resides in the secreted. The protein is Alpha-1-antiproteinase 4 of Equus caballus (Horse).